Reading from the N-terminus, the 199-residue chain is Nuclear transcription factor Y subunit C-2 (199 aa).

Belongs to the NFYC/HAP5 subunit family. As to quaternary structure, heterotrimeric transcription factor composed of three components, NF-YA, NF-YB and NF-YC. NF-YB and NF-YC must interact and dimerize for NF-YA association and DNA binding. Interacts with HTT1 in both cytoplasm and nucleus. In terms of tissue distribution, ubiquitous.

The protein resides in the nucleus. It localises to the cytoplasm. In terms of biological role, stimulates the transcription of various genes by recognizing and binding to a CCAAT motif in promoters. This Arabidopsis thaliana (Mouse-ear cress) protein is Nuclear transcription factor Y subunit C-2 (NFYC2).